The sequence spans 436 residues: Trigger factor (436 aa).

The region spanning 161–246 (EDQLNIDFVG…VNTVSEPKLP (86 aa)) is the PPIase FKBP-type domain.

This sequence belongs to the FKBP-type PPIase family. Tig subfamily.

Its subcellular location is the cytoplasm. It catalyses the reaction [protein]-peptidylproline (omega=180) = [protein]-peptidylproline (omega=0). In terms of biological role, involved in protein export. Acts as a chaperone by maintaining the newly synthesized protein in an open conformation. Functions as a peptidyl-prolyl cis-trans isomerase. This is Trigger factor from Pseudomonas savastanoi pv. phaseolicola (strain 1448A / Race 6) (Pseudomonas syringae pv. phaseolicola (strain 1448A / Race 6)).